A 1033-amino-acid chain; its full sequence is DNA polymerase I A, chloroplastic (1033 aa).

The segment covering Met1–Pro11 has biased composition (pro residues). Disordered stretches follow at residues Met1 to Pro32 and Thr104 to Ser142. The transit peptide at Met1–Ser55 directs the protein to the chloroplast. Over residues Leu115 to Arg124 the composition is skewed to basic and acidic residues. Over residues Ser125–Ser142 the composition is skewed to polar residues. The 3'-5' exonuclease domain maps to Phe321 to Glu482. The interval Cys696 to Tyr1030 is polymerase.

It belongs to the DNA polymerase type-A family. As to expression, expressed in shoot apical meristem, root apical meristem, leaf primordia and the marginal meristem.

Its subcellular location is the plastid. It is found in the chloroplast. It catalyses the reaction DNA(n) + a 2'-deoxyribonucleoside 5'-triphosphate = DNA(n+1) + diphosphate. Its activity is regulated as follows. Inhibited by dideoxythymidine-triphosphate (ddTTP), but not by aphidicolin and N-ethylmaleimide. Functionally, in addition to polymerase activity, this DNA polymerase exhibits 5'-3' exonuclease activity. May be required for DNA replication and accumulation in plastids. This is DNA polymerase I A, chloroplastic from Oryza sativa subsp. japonica (Rice).